We begin with the raw amino-acid sequence, 773 residues long: DC-STAMP domain-containing protein 2 (773 aa).

Residues 1–26 are Cytoplasmic-facing; sequence MPKVMKDVVHPLGGEEPSMARAVVRS. Residues 27 to 47 form a helical membrane-spanning segment; that stretch reads VGGFTLGLSLATAYGLLELLV. Residues 48–51 are Extracellular-facing; it reads EGHS. A helical transmembrane segment spans residues 52-72; the sequence is PWGCLVGTLTLAAFLSLGMGF. The Cytoplasmic segment spans residues 73–233; sequence SRQVRATVLL…IPQAYHLCYV (161 aa). Residues 234–254 form a helical membrane-spanning segment; sequence LMPFKLALCGLASLVQVFCVI. At 255-322 the chain is on the extracellular side; it reads PKYIQPFLRQ…SMKLHRVREA (68 aa). N-linked (GlcNAc...) asparagine glycosylation is found at asparagine 284 and asparagine 296. The helical transmembrane segment at 323–343 threads the bilayer; the sequence is LALMGFTTPLLLVLLYLQALF. Residues 344–415 are Cytoplasmic-facing; that stretch reads YRYCYLNWDH…ILETFNLIRH (72 aa). Residues 416 to 436 form a helical membrane-spanning segment; that stretch reads LLLVLFLVFLDYAVFWVLDLA. Over 437 to 499 the chain is Extracellular; that stretch reads RHQLQGEIVA…LRPSEPDSTG (63 aa). Asparagine 480 is a glycosylation site (N-linked (GlcNAc...) asparagine). Residues 500–520 form a helical membrane-spanning segment; that stretch reads YIVIGVMYGLCFFITLFGSYV. Over 521 to 773 the chain is Cytoplasmic; the sequence is SRLRRVICAS…LPDPSHPPPK (253 aa). The span at 692–701 shows a compositional bias: low complexity; the sequence is SLSMESTSES. Residues 692–773 form a disordered region; the sequence is SLSMESTSES…LPDPSHPPPK (82 aa). The span at 758–773 shows a compositional bias: pro residues; the sequence is PLSPPSLPDPSHPPPK.

In terms of assembly, interacts with DCST1.

It localises to the cytoplasmic vesicle. The protein localises to the secretory vesicle. The protein resides in the acrosome membrane. Functionally, essential sperm cell-surface protein required for sperm-egg fusion and fertilization. This Homo sapiens (Human) protein is DC-STAMP domain-containing protein 2 (DCST2).